A 270-amino-acid polypeptide reads, in one-letter code: Sulfur carrier protein FdhD (270 aa).

2 stretches are compositionally biased toward basic and acidic residues: residues 1–10 (MSMQDHDRTE) and 20–30 (RHLDGSSRPDW). A disordered region spans residues 1 to 30 (MSMQDHDRTEQGMTSLAVTRHLDGSSRPDW). The active-site Cysteine persulfide intermediate is Cys117.

It belongs to the FdhD family.

The protein resides in the cytoplasm. Functionally, required for formate dehydrogenase (FDH) activity. Acts as a sulfur carrier protein that transfers sulfur from IscS to the molybdenum cofactor prior to its insertion into FDH. The sequence is that of Sulfur carrier protein FdhD from Chromobacterium violaceum (strain ATCC 12472 / DSM 30191 / JCM 1249 / CCUG 213 / NBRC 12614 / NCIMB 9131 / NCTC 9757 / MK).